We begin with the raw amino-acid sequence, 414 residues long: Na(+)-translocating NADH-quinone reductase subunit B (414 aa).

4 helical membrane passes run 23–40 (WFAL…PGLV), 56–76 (IMIM…YNAG), 129–149 (FLPI…LFCM), and 164–184 (ILFA…LGIT). Position 236 is an FMN phosphoryl threonine (T236). The next 5 helical transmembrane spans lie at 268 to 288 (IPGS…AMIV), 297 to 317 (IIAG…VVGS), 325 to 345 (MPWH…FMAT), 358 to 378 (WWYG…NPAY), and 381 to 401 (GMML…HVVI).

Belongs to the NqrB/RnfD family. Composed of six subunits; NqrA, NqrB, NqrC, NqrD, NqrE and NqrF. Requires FMN as cofactor.

Its subcellular location is the cell inner membrane. It carries out the reaction a ubiquinone + n Na(+)(in) + NADH + H(+) = a ubiquinol + n Na(+)(out) + NAD(+). Functionally, NQR complex catalyzes the reduction of ubiquinone-1 to ubiquinol by two successive reactions, coupled with the transport of Na(+) ions from the cytoplasm to the periplasm. NqrA to NqrE are probably involved in the second step, the conversion of ubisemiquinone to ubiquinol. The polypeptide is Na(+)-translocating NADH-quinone reductase subunit B (Vibrio parahaemolyticus serotype O3:K6 (strain RIMD 2210633)).